The sequence spans 809 residues: Pentatricopeptide repeat-containing protein At1g11290, chloroplastic (809 aa).

A chloroplast-targeting transit peptide spans Met1 to Arg46. PPR repeat units lie at residues Glu68–Lys98, Leu99–Pro133, Val134–Leu168, Asp169–Arg199, Asp200–Pro234, Ser235–Ser269, Leu270–Arg300, Asn301–Pro335, Thr336–Arg370, Asn371–Arg401, Thr402–Pro436, Asp437–Lys471, Asn472–Arg502, His503–Pro537, Asn538–Asn568, and Ser574–Lys604. The segment at Val609–Lys684 is type E motif. The segment at Asn685 to Lys715 is type E(+) motif. A type DYW motif region spans residues Glu716–Trp809.

The protein belongs to the PPR family. PCMP-H subfamily.

It is found in the plastid. The protein resides in the chloroplast. Functionally, involved in multiple sites RNA editing events in chloroplasts. Involved in the editing of the site 7 of ndhB (ndhB-7) and site 5 of ndhD (ndhD-5) transcripts, which are two plastid-encoded subunits of the chloroplast NAD(P)H dehydrogenase (NDH) complex. Involved in the editing of the site 3 of rpoB (rpoB-3) transcript. Required for the activity of the NDH complex of the photosynthetic electron transport chain. Possesses low endoribonuclease activity in vitro. This Arabidopsis thaliana (Mouse-ear cress) protein is Pentatricopeptide repeat-containing protein At1g11290, chloroplastic (PCMP-H40).